The chain runs to 450 residues: Trigger factor (450 aa).

One can recognise a PPIase FKBP-type domain in the interval 161–246; the sequence is GDRVVIDFKG…VKTVEAPEYP (86 aa). Positions 422 to 450 are disordered; the sequence is PMSLQELMSPQQPEAESAEGESKQDETKE. Residues 441-450 are compositionally biased toward basic and acidic residues; the sequence is GESKQDETKE.

This sequence belongs to the FKBP-type PPIase family. Tig subfamily.

It localises to the cytoplasm. The enzyme catalyses [protein]-peptidylproline (omega=180) = [protein]-peptidylproline (omega=0). In terms of biological role, involved in protein export. Acts as a chaperone by maintaining the newly synthesized protein in an open conformation. Functions as a peptidyl-prolyl cis-trans isomerase. This chain is Trigger factor, found in Alkalilimnicola ehrlichii (strain ATCC BAA-1101 / DSM 17681 / MLHE-1).